The sequence spans 307 residues: D-alanine--D-alanine ligase (307 aa).

The ATP-grasp domain occupies 105–304 (KMLWKGFGLP…FEQLVVKILE (200 aa)). Residue 135 to 190 (VERLGLPLMVKPSREGSSVGLTKVNAVEELKNAVDLALTHDDTVLIEEWLSGIEMT) participates in ATP binding. Positions 258, 271, and 273 each coordinate Mg(2+).

It belongs to the D-alanine--D-alanine ligase family. The cofactor is Mg(2+). It depends on Mn(2+) as a cofactor.

It is found in the cytoplasm. The catalysed reaction is 2 D-alanine + ATP = D-alanyl-D-alanine + ADP + phosphate + H(+). It functions in the pathway cell wall biogenesis; peptidoglycan biosynthesis. Cell wall formation. In Mannheimia succiniciproducens (strain KCTC 0769BP / MBEL55E), this protein is D-alanine--D-alanine ligase.